A 214-amino-acid chain; its full sequence is Adenylate kinase (214 aa).

10-15 (GAGKGT) contributes to the ATP binding site. An NMP region spans residues 30–59 (STGDMFRAAIKEGTELGKQAKALMDEGKLV). AMP contacts are provided by residues threonine 31, arginine 36, 57-59 (KLV), 85-88 (GFPR), and glutamine 92. Residues 122–159 (GRRVHQPSGRTYHVVYNPPKVEGKDDVTGEDLIIRQDD) form an LID region. Residues arginine 123 and 132 to 133 (TY) contribute to the ATP site. AMP contacts are provided by arginine 156 and arginine 167. Lysine 200 is an ATP binding site.

It belongs to the adenylate kinase family. Monomer.

It localises to the cytoplasm. It carries out the reaction AMP + ATP = 2 ADP. Its pathway is purine metabolism; AMP biosynthesis via salvage pathway; AMP from ADP: step 1/1. In terms of biological role, catalyzes the reversible transfer of the terminal phosphate group between ATP and AMP. Plays an important role in cellular energy homeostasis and in adenine nucleotide metabolism. This chain is Adenylate kinase, found in Actinobacillus pleuropneumoniae serotype 5b (strain L20).